The following is a 344-amino-acid chain: Anthranilate phosphoribosyltransferase (344 aa).

5-phospho-alpha-D-ribose 1-diphosphate is bound by residues Gly-79, 82–83, Thr-87, 89–92, 107–115, and Ser-119; these read GD, NIST, and KHGNRSVSS. Gly-79 serves as a coordination point for anthranilate. Ser-91 contacts Mg(2+). Asn-110 serves as a coordination point for anthranilate. An anthranilate-binding site is contributed by Arg-165. Asp-224 and Glu-225 together coordinate Mg(2+).

Belongs to the anthranilate phosphoribosyltransferase family. Homodimer. It depends on Mg(2+) as a cofactor.

It catalyses the reaction N-(5-phospho-beta-D-ribosyl)anthranilate + diphosphate = 5-phospho-alpha-D-ribose 1-diphosphate + anthranilate. It participates in amino-acid biosynthesis; L-tryptophan biosynthesis; L-tryptophan from chorismate: step 2/5. Functionally, catalyzes the transfer of the phosphoribosyl group of 5-phosphorylribose-1-pyrophosphate (PRPP) to anthranilate to yield N-(5'-phosphoribosyl)-anthranilate (PRA). The protein is Anthranilate phosphoribosyltransferase of Salinibacter ruber (strain DSM 13855 / M31).